A 330-amino-acid chain; its full sequence is DNA-directed RNA polymerase subunit alpha (330 aa).

The interval methionine 1–glutamate 231 is alpha N-terminal domain (alpha-NTD). The tract at residues phenylalanine 250 to arginine 330 is alpha C-terminal domain (alpha-CTD).

Belongs to the RNA polymerase alpha chain family. Homodimer. The RNAP catalytic core consists of 2 alpha, 1 beta, 1 beta' and 1 omega subunit. When a sigma factor is associated with the core the holoenzyme is formed, which can initiate transcription.

The enzyme catalyses RNA(n) + a ribonucleoside 5'-triphosphate = RNA(n+1) + diphosphate. Its function is as follows. DNA-dependent RNA polymerase catalyzes the transcription of DNA into RNA using the four ribonucleoside triphosphates as substrates. The protein is DNA-directed RNA polymerase subunit alpha of Polaromonas naphthalenivorans (strain CJ2).